We begin with the raw amino-acid sequence, 517 residues long: Endoglycoceramidase (517 aa).

Positions 1–17 (MISVALIILFLAKVISG) are cleaved as a signal peptide. A glycan (N-linked (GlcNAc...) asparagine) is linked at N99. Residue E230 is the Proton donor of the active site. N-linked (GlcNAc...) asparagine glycans are attached at residues N298, N380, and N393.

The protein belongs to the glycosyl hydrolase 5 (cellulase A) family. As to expression, expressed uniformly in digestive cells, tentacles and peduncle regions suggesting expression in the endoderm throughout the whole body (at protein level).

The protein resides in the secreted. The enzyme catalyses an oligoglycosyl-(1-&gt;4)-beta-D-glucosyl-(1&lt;-&gt;1)-ceramide + H2O = an oligoglycosyl-(1-&gt;4)-D-glucose + an N-acyl-sphingoid base. Cu(2+), zinc, manganese, calcium, magnesium and EDTA have no significant effects on enzyme activity. Enzyme requires presence of detergents such as Triton X-100 and Lubrol PX for the hydrolysis of glycosphingolipids. Taurodeoxycholate strongly inhibits the enzyme activity. Hydrolysis of the glycosidic linkage between oligosaccharides and ceramides of glycosphingolipids, optimal substrates appear to be the glycosphingolipids with a gangliotetraose structure. The polypeptide is Endoglycoceramidase (Hydra vulgaris (Hydra)).